A 141-amino-acid chain; its full sequence is Galactose-6-phosphate isomerase subunit LacA (141 aa).

Belongs to the LacAB/RpiB family. Heteromultimeric protein consisting of LacA and LacB.

The catalysed reaction is aldehydo-D-galactose 6-phosphate = keto-D-tagatose 6-phosphate. It functions in the pathway carbohydrate metabolism; D-galactose 6-phosphate degradation; D-tagatose 6-phosphate from D-galactose 6-phosphate: step 1/1. This is Galactose-6-phosphate isomerase subunit LacA from Streptococcus agalactiae serotype Ia (strain ATCC 27591 / A909 / CDC SS700).